Reading from the N-terminus, the 926-residue chain is DNA mismatch repair protein MutS (926 aa).

A disordered region spans residues 1–60; it reads MAASQNPIQGSLFGGNEESDLNKAEKLKGSERSNVNLSHQQLKEDASLRPRIKQTPKNPN. Over residues 20-31 the composition is skewed to basic and acidic residues; the sequence is DLNKAEKLKGSE. 726 to 733 is a binding site for ATP; it reads GPNASGKS.

This sequence belongs to the DNA mismatch repair MutS family.

In terms of biological role, this protein is involved in the repair of mismatches in DNA. It is possible that it carries out the mismatch recognition step. This protein has a weak ATPase activity. The polypeptide is DNA mismatch repair protein MutS (Prochlorococcus marinus (strain NATL2A)).